Reading from the N-terminus, the 374-residue chain is Chaperone protein DnaJ (374 aa).

Positions aspartate 5–glycine 70 constitute a J domain. The segment at glycine 133–tyrosine 211 adopts a CR-type zinc-finger fold. Zn(2+)-binding residues include cysteine 146, cysteine 149, cysteine 163, cysteine 166, cysteine 185, cysteine 188, cysteine 199, and cysteine 202. CXXCXGXG motif repeat units follow at residues cysteine 146–glycine 153, cysteine 163–glycine 170, cysteine 185–glycine 192, and cysteine 199–glycine 206.

It belongs to the DnaJ family. As to quaternary structure, homodimer. Zn(2+) serves as cofactor.

Its subcellular location is the cytoplasm. Functionally, participates actively in the response to hyperosmotic and heat shock by preventing the aggregation of stress-denatured proteins and by disaggregating proteins, also in an autonomous, DnaK-independent fashion. Unfolded proteins bind initially to DnaJ; upon interaction with the DnaJ-bound protein, DnaK hydrolyzes its bound ATP, resulting in the formation of a stable complex. GrpE releases ADP from DnaK; ATP binding to DnaK triggers the release of the substrate protein, thus completing the reaction cycle. Several rounds of ATP-dependent interactions between DnaJ, DnaK and GrpE are required for fully efficient folding. Also involved, together with DnaK and GrpE, in the DNA replication of plasmids through activation of initiation proteins. In Pseudomonas putida (strain ATCC 700007 / DSM 6899 / JCM 31910 / BCRC 17059 / LMG 24140 / F1), this protein is Chaperone protein DnaJ.